Consider the following 42-residue polypeptide: MEEGNNNEEVIHLNNFHCHRGQDFVIFFWKTQIIQREKTESL.

The sequence is that of Putative protein RNF216-like (RNF216P1) from Homo sapiens (Human).